Consider the following 757-residue polypeptide: Xylosyl- and glucuronyltransferase LARGE1 (757 aa).

Residues 1–10 are Cytoplasmic-facing; sequence MLGMCRGRRK. Residues 11 to 31 traverse the membrane as a helical; Signal-anchor for type II membrane protein segment; that stretch reads FVAASLALIFIPALTWLYLSS. The Lumenal portion of the chain corresponds to 32 to 757; it reads ANITVKPLPL…LKYMTVDNNS (726 aa). A coiled-coil region spans residues 50–82; sequence AVVGAAAEHQSLELRLRDVEEHNNALRREISRT. A disordered region spans residues 76–127; the sequence is RREISRTPRVPTHSSHPSSSRHGNQLHTHSTEEGTGDSEAKKGAAAGNSSDC. Low complexity predominate over residues 82–97; sequence TPRVPTHSSHPSSSRH. N-linked (GlcNAc...) asparagine glycosylation is found at N123 and N149. Residues 139–414 form a xylosyltransferase activity region; sequence IHIAIVCAGY…FLEYDGNLLR (276 aa). Residues D243 and D245 each coordinate Mn(2+). N-linked (GlcNAc...) asparagine glycosylation occurs at N273. Positions 415-757 are glucuronyltransferase activity; the sequence is RELFGCPSET…LKYMTVDNNS (343 aa). Mn(2+) is bound by residues D564 and D566. N-linked (GlcNAc...) asparagine glycosylation is present at N738.

The protein in the C-terminal section; belongs to the glycosyltransferase 49 family. It in the N-terminal section; belongs to the glycosyltransferase 8 family. Requires Mn(2+) as cofactor.

It is found in the golgi apparatus membrane. It catalyses the reaction 3-O-[beta-D-GlcA-(1-&gt;3)-beta-D-Xyl-(1-&gt;4)-Rib-ol-P-Rib-ol-P-3-beta-D-GalNAc-(1-&gt;3)-beta-D-GlcNAc-(1-&gt;4)-(O-6-P-alpha-D-Man)]-Thr-[protein] + UDP-alpha-D-xylose = 3-O-[alpha-D-Xyl-(1-&gt;3)-beta-D-GlcA-(1-&gt;4)-beta-D-Xyl-(1-&gt;4)-Rib-ol-P-Rib-ol-P-3-beta-D-GalNAc-(1-&gt;3)-beta-D-GlcNAc-(1-&gt;4)-(O-6-P-alpha-D-Man)]-Thr-[protein] + UDP + H(+). It carries out the reaction 3-O-{(1-&gt;[3)-alpha-D-Xyl-(1-&gt;3)-beta-D-GlcA-(1-&gt;](n)-4)-beta-D-Xyl-(1-&gt;4)-Rib-ol-P-Rib-ol-P-3-beta-D-GalNAc-(1-&gt;3)-beta-D-GlcNAc-(1-&gt;4)-O-6-P-alpha-D-Man}-L-Thr-[protein] + UDP-alpha-D-glucuronate = 3-O-{beta-D-GlcA-(1-&gt;[3)-alpha-D-Xyl-(1-&gt;3)-beta-D-GlcA-(1-&gt;](n)-4)-beta-D-Xyl-(1-&gt;4)-Rib-ol-P-Rib-ol-P-3-beta-D-GalNAc-(1-&gt;3)-beta-D-GlcNAc-(1-&gt;4)-O-6-P-alpha-D-Man}-L-Thr-[protein] + UDP + H(+). The catalysed reaction is 3-O-{beta-D-GlcA-(1-&gt;[3)-alpha-D-Xyl-(1-&gt;3)-beta-D-GlcA-(1-&gt;](n)-4)-beta-D-Xyl-(1-&gt;4)-Rib-ol-P-Rib-ol-P-3-beta-D-GalNAc-(1-&gt;3)-beta-D-GlcNAc-(1-&gt;4)-O-6-P-alpha-D-Man}-L-Thr-[protein] + UDP-alpha-D-xylose = 3-O-{(1-&gt;[3)-alpha-D-Xyl-(1-&gt;3)-beta-D-GlcA-(1-&gt;](n+1)-4)-beta-D-Xyl-(1-&gt;4)-Rib-ol-P-Rib-ol-P-3-beta-D-GalNAc-(1-&gt;3)-beta-D-GlcNAc-(1-&gt;4)-O-6-P-alpha-D-Man}-L-Thr-[protein] + UDP + H(+). Its pathway is protein modification; protein glycosylation. Functionally, bifunctional glycosyltransferase with both alpha-1,3-xylosyltransferase and beta-1,3-glucuronyltransferase activities involved in the maturation of alpha-dystroglycan (DAG1) by glycosylation leading to DAG1 binding to laminin G-like domain-containing extracellular proteins with high affinity. Elongates the glucuronyl-beta-1,4-xylose-beta disaccharide primer structure initiated by B4GAT1 by adding repeating units [-3-Xylose-alpha-1,3-GlcA-beta-1-] to produce a heteropolysaccharide. Requires the phosphorylation of core M3 (O-mannosyl trisaccharide) by POMK to elongate the glucuronyl-beta-1,4-xylose-beta disaccharide primer. Plays a key role in skeletal muscle function and regeneration. This is Xylosyl- and glucuronyltransferase LARGE1 from Danio rerio (Zebrafish).